The primary structure comprises 292 residues: Calcium-binding protein CBP (292 aa).

The tract at residues 1 to 80 is disordered; that stretch reads MAGYPPNPGS…YGSGGGYGAP (80 aa). Residues 12 to 21 show a composition bias toward gly residues; sequence YPYGGAGGYG. Positions 22 to 40 are enriched in pro residues; it reads APPPPYGSSPAPSAPPYGA. EF-hand domains follow at residues 121–156 and 187–222; these read GTDP…YSQS and YSLQ…LGYS. 10 residues coordinate Ca(2+): Asp-134, Asp-136, Ser-138, Met-140, Glu-145, Asp-200, Asp-202, Ser-204, Lys-206, and Glu-211.

Potential calcium sensor. In Oryza sativa subsp. japonica (Rice), this protein is Calcium-binding protein CBP.